Reading from the N-terminus, the 787-residue chain is Filamentous growth regulator 27 (787 aa).

Residues methionine 1–aspartate 22 are disordered. The zn(2)-C6 fungal-type DNA-binding region spans cysteine 31 to cysteine 57. A coiled-coil region spans residues glycine 69–serine 97. Disordered regions lie at residues serine 120–proline 140 and arginine 200–isoleucine 221. The span at aspartate 209–isoleucine 221 shows a compositional bias: polar residues.

Its subcellular location is the nucleus. Functionally, transcription factor involved in yeast cell adherence to silicone substrate, filamentous growth, and biofilm formation. This chain is Filamentous growth regulator 27 (FGR27), found in Candida albicans (strain SC5314 / ATCC MYA-2876) (Yeast).